Reading from the N-terminus, the 402-residue chain is Phytoene synthase 2, chloroplastic (402 aa).

The N-terminal 54 residues, 1–54, are a transit peptide targeting the chloroplast; that stretch reads MAAGSSAVWAAQHPACSGGKFHHLSPSHSHCRPRRALQTPPALPARRSGASPPR. A compositionally biased stretch (basic residues) spans 20–35; sequence KFHHLSPSHSHCRPRR. Residues 20–54 are disordered; the sequence is KFHHLSPSHSHCRPRRALQTPPALPARRSGASPPR. Positions 44-54 are enriched in low complexity; that stretch reads PARRSGASPPR.

Belongs to the phytoene/squalene synthase family. As to expression, expressed in leaves and endosperm.

It is found in the plastid. Its subcellular location is the chloroplast. It localises to the plastoglobule. The enzyme catalyses 2 (2E,6E,10E)-geranylgeranyl diphosphate = 15-cis-phytoene + 2 diphosphate. Its function is as follows. Catalyzes the conversion of geranylgeranyl diphosphate to phytoene. Mediates the first committed step in carotenoid biosynthesis. This chain is Phytoene synthase 2, chloroplastic, found in Zea mays (Maize).